The following is a 760-amino-acid chain: General transcription and DNA repair factor IIH helicase subunit XPD (760 aa).

In terms of domain architecture, Helicase ATP-binding spans 7–283 (GLLVYFPYDY…KETDEQRLRE (277 aa)). 42-49 (MPSGTGKT) serves as a coordination point for ATP. Residues Cys116, Cys134, Cys155, and Cys190 each contribute to the [4Fe-4S] cluster site. The DEAH box signature appears at 234–237 (DEAH). Residues 438–637 (MDASLAIKPV…TQSRILKARL (200 aa)) are mediates interaction with MMS19. The short motif at 682–695 (KRFARADKRGKLPR) is the Nuclear localization signal element.

This sequence belongs to the helicase family. RAD3/XPD subfamily. Component of the 7-subunit TFIIH core complex composed of XPB/ERCC3, XPD/ERCC2, GTF2H1, GTF2H2, GTF2H3, GTF2H4 and GTF2H5, which is active in NER. The core complex associates with the 3-subunit CDK-activating kinase (CAK) module composed of CCNH/cyclin H, CDK7 and MNAT1 to form the 10-subunit holoenzyme (holo-TFIIH) active in transcription. The interaction with GTF2H2 results in the stimulation of the 5'--&gt;3' helicase activity. Component of the MMXD complex, which includes CIAO1, ERCC2, CIAO2B, MMS19 and SLC25A5. Interacts with CIAO1 and CIAO2B; the interaction WITH CIAO2B is direct. Interacts with ATF7IP. Interacts directly with MMS19. Part of TBP-based Pol II pre-initiation complex (PIC), in which Pol II core assembles with general transcription factors and other specific initiation factors including GTF2E1, GTF2E2, GTF2F1, GTF2F2, TCEA1, ERCC2, ERCC3, GTF2H2, GTF2H3, GTF2H4, GTF2H5, GTF2A1, GTF2A2, GTF2B and TBP; this large multi-subunit PIC complex mediates DNA unwinding and targets Pol II core to the transcription start site where the first phosphodiester bond forms. Requires Mg(2+) as cofactor. It depends on [4Fe-4S] cluster as a cofactor. In terms of processing, ISGylated.

The protein localises to the nucleus. It is found in the cytoplasm. It localises to the cytoskeleton. The protein resides in the spindle. The enzyme catalyses Couples ATP hydrolysis with the unwinding of duplex DNA at the replication fork by translocating in the 5'-3' direction. This creates two antiparallel DNA single strands (ssDNA). The leading ssDNA polymer is the template for DNA polymerase III holoenzyme which synthesizes a continuous strand.. It catalyses the reaction ATP + H2O = ADP + phosphate + H(+). Its function is as follows. ATP-dependent 5'-3' DNA helicase, component of the general transcription and DNA repair factor IIH (TFIIH) core complex, which is involved in general and transcription-coupled nucleotide excision repair (NER) of damaged DNA and, when complexed to CDK-activating kinase (CAK), involved in transcription by RNA polymerase II. In NER, TFIIH acts by opening DNA around the lesion to allow the excision of the damaged oligonucleotide and its replacement by a new DNA fragment. The ATP-dependent helicase activity of XPD/ERCC2 is required for DNA opening. In transcription, TFIIH has an essential role in transcription initiation. When the pre-initiation complex (PIC) has been established, TFIIH is required for promoter opening and promoter escape. Phosphorylation of the C-terminal tail (CTD) of the largest subunit of RNA polymerase II by the kinase module CAK controls the initiation of transcription. XPD/ERCC2 acts by forming a bridge between CAK and the core-TFIIH complex. Involved in the regulation of vitamin-D receptor activity. As part of the mitotic spindle-associated MMXD complex it plays a role in chromosome segregation. Might have a role in aging process and could play a causative role in the generation of skin cancers. The sequence is that of General transcription and DNA repair factor IIH helicase subunit XPD (ERCC2) from Bos taurus (Bovine).